The following is a 107-amino-acid chain: Serine-rich and transmembrane domain-containing protein 1 (107 aa).

Residues 43–63 (IYVSIFLSLLAFLLLLLIIAL) traverse the membrane as a helical segment.

The protein localises to the membrane. This Mus musculus (Mouse) protein is Serine-rich and transmembrane domain-containing protein 1 (Sertm1).